The primary structure comprises 139 residues: Nucleoside diphosphate kinase (139 aa).

ATP is bound by residues lysine 9, phenylalanine 57, arginine 85, threonine 91, arginine 102, and asparagine 112. The Pros-phosphohistidine intermediate role is filled by histidine 115.

The protein belongs to the NDK family. As to quaternary structure, homotetramer. It depends on Mg(2+) as a cofactor.

The protein resides in the cytoplasm. The catalysed reaction is a 2'-deoxyribonucleoside 5'-diphosphate + ATP = a 2'-deoxyribonucleoside 5'-triphosphate + ADP. It carries out the reaction a ribonucleoside 5'-diphosphate + ATP = a ribonucleoside 5'-triphosphate + ADP. In terms of biological role, major role in the synthesis of nucleoside triphosphates other than ATP. The ATP gamma phosphate is transferred to the NDP beta phosphate via a ping-pong mechanism, using a phosphorylated active-site intermediate. The protein is Nucleoside diphosphate kinase of Exiguobacterium sp. (strain ATCC BAA-1283 / AT1b).